We begin with the raw amino-acid sequence, 325 residues long: Glutarate 2-hydroxylase (325 aa).

The Fe cation site is built by histidine 160, aspartate 162, and histidine 292.

Belongs to the glutarate hydroxylase family. Homotetramer. Requires Fe(2+) as cofactor.

It catalyses the reaction glutarate + 2-oxoglutarate + O2 = (S)-2-hydroxyglutarate + succinate + CO2. The protein operates within amino-acid degradation. Functionally, acts as an alpha-ketoglutarate-dependent dioxygenase catalyzing hydroxylation of glutarate (GA) to L-2-hydroxyglutarate (L2HG). Functions in a L-lysine degradation pathway that proceeds via cadaverine, glutarate and L-2-hydroxyglutarate. This is Glutarate 2-hydroxylase from Escherichia coli O6:H1 (strain CFT073 / ATCC 700928 / UPEC).